The chain runs to 551 residues: Cytochrome c oxidase subunit 1 (551 aa).

The chain crosses the membrane as a helical span at residues 34 to 54 (TLYLYSGVWGGLFGASLSLMI). Position 62 (Gly-62) interacts with Ca(2+). A Fe(II)-heme a-binding site is contributed by His-79. Helical transmembrane passes span 81–101 (LMMI…NWLI), 126–146 (ALYL…GWTI), 163–183 (VLIV…INFA), 209–229 (TAVL…MILF), 252–272 (LFWF…FGVM), and 285–305 (VFGL…GCMV). His-258 is a binding site for Cu cation. A cross-link (1'-histidyl-3'-tyrosine (His-Tyr)) is located at residues 258-262 (HPEVY). Residue Tyr-262 coordinates O2. Positions 308 and 309 each coordinate Cu cation. 2 helical membrane-spanning segments follow: residues 326-346 (ATMV…ATMA) and 356-376 (AYWS…GVLL). Positions 386 and 387 each coordinate Mg(2+). 3 helical membrane-spanning segments follow: residues 391-411 (VVAH…FCGL), 432-452 (FMAM…LGLS), and 475-495 (GSAV…EALV). His-394 is a heme a3 binding site. Fe(II)-heme a is bound at residue His-396.

The protein belongs to the heme-copper respiratory oxidase family. Component of the cytochrome c oxidase (complex IV, CIV), a multisubunit enzyme composed of a catalytic core of 3 subunits and several supernumerary subunits. The complex exists as a monomer or a dimer and forms supercomplexes (SCs) in the inner mitochondrial membrane with ubiquinol-cytochrome c oxidoreductase (cytochrome b-c1 complex, complex III, CIII). Heme serves as cofactor. Cu cation is required as a cofactor.

The protein resides in the mitochondrion inner membrane. The catalysed reaction is 4 Fe(II)-[cytochrome c] + O2 + 8 H(+)(in) = 4 Fe(III)-[cytochrome c] + 2 H2O + 4 H(+)(out). It participates in energy metabolism; oxidative phosphorylation. Component of the cytochrome c oxidase, the last enzyme in the mitochondrial electron transport chain which drives oxidative phosphorylation. The respiratory chain contains 3 multisubunit complexes succinate dehydrogenase (complex II, CII), ubiquinol-cytochrome c oxidoreductase (cytochrome b-c1 complex, complex III, CIII) and cytochrome c oxidase (complex IV, CIV), that cooperate to transfer electrons derived from NADH and succinate to molecular oxygen, creating an electrochemical gradient over the inner membrane that drives transmembrane transport and the ATP synthase. Cytochrome c oxidase is the component of the respiratory chain that catalyzes the reduction of oxygen to water. Electrons originating from reduced cytochrome c in the intermembrane space (IMS) are transferred via the dinuclear copper A center (CU(A)) of subunit 2 and heme A of subunit 1 to the active site in subunit 1, a binuclear center (BNC) formed by heme A3 and copper B (CU(B)). The BNC reduces molecular oxygen to 2 water molecules using 4 electrons from cytochrome c in the IMS and 4 protons from the mitochondrial matrix. This is Cytochrome c oxidase subunit 1 (COI) from Mytilus edulis (Blue mussel).